A 731-amino-acid chain; its full sequence is Zinc finger protein 615 (731 aa).

The KRAB domain maps to 8-79; the sequence is LTLEDVAVDF…EDEIYSRICS (72 aa). 19 consecutive C2H2-type zinc fingers follow at residues 204–226, 232–254, 260–282, 288–310, 316–338, 344–366, 372–394, 400–422, 428–450, 456–478, 484–506, 512–534, 540–562, 568–590, 596–618, 624–646, 652–674, 680–702, and 708–730; these read HVCS…QRVH, HVCS…QRTH, YECT…QKTH, YTCS…QRTH, HGCS…QKTH, YICS…HRTH, FICN…QQTH, YKCN…QRTH, YVCT…QRTH, YICN…QRTH, YVCG…QRTH, YICN…RRTH, YVCS…QRTH, YICN…QQTH, YKCN…QRFH, FACT…QRIH, YKCS…QRKH, and YGCS…RRIH.

Belongs to the krueppel C2H2-type zinc-finger protein family.

The protein localises to the nucleus. May be involved in transcriptional regulation. This chain is Zinc finger protein 615 (ZNF615), found in Homo sapiens (Human).